The sequence spans 410 residues: Translation initiation factor 2 subunit gamma (410 aa).

Residues Q6–E203 form the tr-type G domain. A G1 region spans residues G15–T22. D18, T22, G43, and S45 together coordinate Mg(2+). D18–S23 contributes to the GTP binding site. Residues G43 to R47 form a G2 region. Zn(2+) is bound by residues C58, C61, C73, and C76. A G3 region spans residues D90–G93. GTP is bound by residues N146 to D149 and S181 to H183. Residues N146–D149 form a G4 region. Positions S181–H183 are G5.

The protein belongs to the TRAFAC class translation factor GTPase superfamily. Classic translation factor GTPase family. EIF2G subfamily. As to quaternary structure, heterotrimer composed of an alpha, a beta and a gamma chain. It depends on Mg(2+) as a cofactor.

It carries out the reaction GTP + H2O = GDP + phosphate + H(+). EIF-2 functions in the early steps of protein synthesis by forming a ternary complex with GTP and initiator tRNA. In Methanococcus maripaludis (strain DSM 14266 / JCM 13030 / NBRC 101832 / S2 / LL), this protein is Translation initiation factor 2 subunit gamma.